The primary structure comprises 188 residues: Cytochrome c-type protein NrfB (188 aa).

An N-terminal signal peptide occupies residues 1–32 (MSVLRSLLTAGVLASGLLWSLNGITATPAAQA). Positions 49, 52, 53, 78, 81, 82, 113, 116, 117, 138, 141, 142, 163, 166, and 167 each coordinate heme.

Post-translationally, binds 5 heme groups per subunit.

Its subcellular location is the periplasm. It functions in the pathway energy metabolism; nitrogen metabolism. In terms of biological role, plays a role in nitrite reduction. The chain is Cytochrome c-type protein NrfB (nrfB) from Escherichia coli O6:H1 (strain CFT073 / ATCC 700928 / UPEC).